We begin with the raw amino-acid sequence, 420 residues long: Histidine--tRNA ligase (420 aa).

The protein belongs to the class-II aminoacyl-tRNA synthetase family. Homodimer.

The protein localises to the cytoplasm. The enzyme catalyses tRNA(His) + L-histidine + ATP = L-histidyl-tRNA(His) + AMP + diphosphate + H(+). The polypeptide is Histidine--tRNA ligase (Desulforudis audaxviator (strain MP104C)).